Consider the following 169-residue polypeptide: Non-specific lipid transfer protein GPI-anchored 11 (169 aa).

The N-terminal stretch at 1-23 (MAYATILMIFSVVALMSGERAHA) is a signal peptide. Cystine bridges form between Cys-27/Cys-70, Cys-37/Cys-54, Cys-55/Cys-95, and Cys-68/Cys-105. Ser-146 is lipidated: GPI-anchor amidated serine. Residues 147 to 169 (SDASLLSVSFAFVIFMALISSFY) constitute a propeptide, removed in mature form.

This sequence belongs to the plant LTP family. In terms of tissue distribution, expressed in a vascular-specific manner, mainly in roots, and, to a lower extent, in hypocotyls, seedlings stems and flowers.

The protein resides in the cell membrane. It is found in the secreted. In terms of biological role, probable lipid transfer protein. Proteoglycan-like factor that exhibits xylogen activity consisting in mediating local and inductive cell-cell interactions required for xylem differentiation. This chain is Non-specific lipid transfer protein GPI-anchored 11, found in Arabidopsis thaliana (Mouse-ear cress).